The sequence spans 475 residues: Glycogen synthase (475 aa).

K15 is a binding site for ADP-alpha-D-glucose.

This sequence belongs to the glycosyltransferase 1 family. Bacterial/plant glycogen synthase subfamily.

The enzyme catalyses [(1-&gt;4)-alpha-D-glucosyl](n) + ADP-alpha-D-glucose = [(1-&gt;4)-alpha-D-glucosyl](n+1) + ADP + H(+). The protein operates within glycan biosynthesis; glycogen biosynthesis. Its function is as follows. Synthesizes alpha-1,4-glucan chains using ADP-glucose. This is Glycogen synthase from Anaeromyxobacter sp. (strain K).